The sequence spans 177 residues: Bifunctional protein PyrR (177 aa).

The PRPP-binding motif lies at 99 to 111; sequence LVLIDDVIYKGRT.

It belongs to the purine/pyrimidine phosphoribosyltransferase family. PyrR subfamily.

The catalysed reaction is UMP + diphosphate = 5-phospho-alpha-D-ribose 1-diphosphate + uracil. In terms of biological role, regulates the transcription of the pyrimidine nucleotide (pyr) operon in response to exogenous pyrimidines. Also displays a weak uracil phosphoribosyltransferase activity which is not physiologically significant. The chain is Bifunctional protein PyrR from Picosynechococcus sp. (strain ATCC 27264 / PCC 7002 / PR-6) (Agmenellum quadruplicatum).